The sequence spans 7839 residues: Nonribosomal peptide synthetase GRA1 (7839 aa).

Over residues 1 to 23 the composition is skewed to polar residues; that stretch reads MALLNGKSTLPNGHNSSIESPNG. Residues 1–26 form a disordered region; it reads MALLNGKSTLPNGHNSSIESPNGYTE. Residues 264–650 form an adenylation 1 region; the sequence is LASPNSCAVH…LGRIDDQVKI (387 aa). The 74-residue stretch at 793–866 folds into the Carrier 1 domain; sequence SAEALVLRQL…LQAEMSEKKK (74 aa). Ser827 is subject to O-(pantetheine 4'-phosphoryl)serine. Residues 916–1332 are condensation 1; that stretch reads DIYPASPLQE…ILSPSDVAQI (417 aa). Residues 1351–1742 form an adenylation 2 region; sequence FFTQVKRSPD…QRKDAQLKIR (392 aa). A Carrier 2 domain is found at 1880–1957; it reads ELETEAERTM…AMSRQATVSD (78 aa). An O-(pantetheine 4'-phosphoryl)serine modification is found at Ser1918. The tract at residues 1997–2413 is condensation 2; that stretch reads DLYPCTPFQE…LISPSDMETI (417 aa). The interval 2432-2828 is adenylation 3; the sequence is FDRRLSQKHS…GRRDTQLKIR (397 aa). In terms of domain architecture, Carrier 3 spans 2963–3040; that stretch reads IPTTQMEWNL…DLAQAIVLDT (78 aa). Residue Ser3001 is modified to O-(pantetheine 4'-phosphoryl)serine. The condensation 3 stretch occupies residues 3084 to 3496; the sequence is DIYPCTPLQD…QVDLISDSDH (413 aa). The interval 3520–3923 is adenylation 4; sequence RLAVSNPDAE…GRRDSQVKLR (404 aa). One can recognise a Carrier 4 domain in the interval 4057–4134; sequence RPLTEREKDL…DMAAMTTSLS (78 aa). Ser4095 bears the O-(pantetheine 4'-phosphoryl)serine mark. The condensation 4 stretch occupies residues 4234-4569; it reads NLEEFVGRQS…MMNPDDAEEI (336 aa). Positions 4591 to 4982 are adenylation 5; the sequence is HSKGCPDRIA…VSRKDTQVKF (392 aa). The Carrier 5 domain occupies 5113–5189; that stretch reads ALSSDEESQL…DMALCMTSAQ (77 aa). O-(pantetheine 4'-phosphoryl)serine is present on Ser5150. Residues 5224-5653 form a condensation 5 region; that stretch reads EDIYPCSALQ…VSPSDQAEIL (430 aa). An adenylation 6 region spans residues 5671–6069; the sequence is FESRARLQPS…GRRDTQVKLR (399 aa). A Carrier 6 domain is found at 6207–6282; it reads FPSSLAEQQM…HMAAIATTFT (76 aa). At Ser6243 the chain carries O-(pantetheine 4'-phosphoryl)serine. Positions 6321 to 6730 are condensation 6; that stretch reads QDIYPCSALQ…RLADMDLTGP (410 aa). An adenylation 7 region spans residues 6756–7147; the sequence is EQRVKSQPDS…LGRKDSQIKL (392 aa). The Carrier 7 domain maps to 7290 to 7366; that stretch reads KAATPNEKTL…DLARVSRQSI (77 aa). Ser7327 is modified (O-(pantetheine 4'-phosphoryl)serine). Residues 7404-7704 are condensation7; it reads HDIYPCTQVQ…LDYAKKRASS (301 aa).

The protein belongs to the NRP synthetase family.

It functions in the pathway mycotoxin biosynthesis. Its function is as follows. Nonribosomal peptide synthetase; part of the gene cluster that mediates the biosynthesis of gramillins A and B, bicyclic lipopeptides that induce cell death in maize leaves but not in wheat leaves. The nonribosomal peptide synthetase GRA1 incorporates respectively a glutamic adic (Glu), a leucine (Leu), a serine (Ser), a hydroxyglutamine (HOGln), a 2-amino decanoic acid, and 2 cysteins (CysB and CysA). The biosynthesis of 2-amino decanoic acid incorporated in gramillins could be initiated by a fatty acid synthase composed of the alpha and beta subunits FGSG_00036 and FGSG_11656. The cytochrome P450 monooxygenase FGSG_15680 could hydroxylate the fatty acid chain. Subsequent oxidation to the ketone by the oxidoreductase FGSG_00048 and transamination by aminotransferase FGSG_00049 could form 2-amino-decanoic acid. On the other hand, FGSG_15680 could also be responsible for the HO-modified glutamine at the gamma-position. Whether hydroxylation occurs on the fully assembled product or on the Gln residue prior to assembly into the gramillins requires further proof. The thioredoxin FGSG_00043 could also be required for the disulfide-bond formation between CysA and CysB. The specific involvement of the remaining proteins from the cluster is more difficult to discern, but could have broader regulatory (FGSG_00040 and FGSG_11657) or enzymatic functions (FGSG_00044 and FGSG_00045). The final C-domain of GRA1 does not possess the expected sequence of a termination CT domain, often implicated in macrocyclization and release of a cyclopeptidein fungal NRPs; and the thioesterase FGSG_00047 may act in concert with the terminal C-domain of GRA1 to catalyze the formation of the macrocyclic anhydride and release of the products. The sequence is that of Nonribosomal peptide synthetase GRA1 from Gibberella zeae (strain ATCC MYA-4620 / CBS 123657 / FGSC 9075 / NRRL 31084 / PH-1) (Wheat head blight fungus).